The sequence spans 436 residues: MKVALIHSRDDVAGCTIRRHIEQCLDDAHGSANGRTYEFVEVGGRLINAEGVDATLDVNLVIFLSRHSSVNPVPVLTVHATGNFGAAELGGSPRTLAPAAPAMMQATLRALARYCPEGYRVSYEVTHHGPTGLSHPSFFVEIGSTEKEWVDPVAGRAVAEAVLGADPAGAVPLIGIGGTHYAPRETAIALSSRGAFGHIASSRLQVALLDRELVQAMVVQSRAVAAYIDRKAVLPGDVSRISAILDELGIPRLSETEITSLGHLAWEAYREVRALAATVGPQTRCFIHALEGTGPLVLVSLDPVLLSEAKRCDESALVQRFGPLPVAHLATEDNVLLPQFVAFERNSSKIINDLNTLCVKIIRNRESTATENDYLVIRKVRFDPQKARELGVPAGPAYRQLAAGQAVEYDGQIITPDRVSVATETRIHIPGLENYS.

The protein belongs to the DtdA deacylase family. In terms of assembly, monomer. The cofactor is Zn(2+).

The catalysed reaction is a D-aminoacyl-tRNA + H2O = a tRNA + a D-alpha-amino acid + H(+). It catalyses the reaction glycyl-tRNA(Ala) + H2O = tRNA(Ala) + glycine + H(+). Its function is as follows. D-aminoacyl-tRNA deacylase with broad substrate specificity. By recycling D-aminoacyl-tRNA to D-amino acids and free tRNA molecules, this enzyme counteracts the toxicity associated with the formation of D-aminoacyl-tRNA entities in vivo. The protein is D-aminoacyl-tRNA deacylase of Methanoregula boonei (strain DSM 21154 / JCM 14090 / 6A8).